The following is a 507-amino-acid chain: Glycosyltransferase family 92 protein C33H5.2 (507 aa).

The helical transmembrane segment at 6–26 (VILVFCASFALFFTFIIFGRY) threads the bilayer. Residues 155–444 (RDVVMCIAPL…LKCYNEKFYD (290 aa)) form the GT92 domain.

The protein belongs to the glycosyltransferase 92 family.

It is found in the membrane. The protein is Glycosyltransferase family 92 protein C33H5.2 of Caenorhabditis elegans.